Consider the following 94-residue polypeptide: MKKTFTGVVVSDKADKTVSVKVERRFMHPLYGKVVTRSKKYAAHDEQNEYRIGDRVEIIAVRPISKTKTWKVTRLIERPRGIETTAVETEGGNA.

This sequence belongs to the universal ribosomal protein uS17 family. As to quaternary structure, part of the 30S ribosomal subunit.

Its function is as follows. One of the primary rRNA binding proteins, it binds specifically to the 5'-end of 16S ribosomal RNA. This is Small ribosomal subunit protein uS17 from Deinococcus geothermalis (strain DSM 11300 / CIP 105573 / AG-3a).